We begin with the raw amino-acid sequence, 74 residues long: Putative membrane protein insertion efficiency factor (74 aa).

The protein belongs to the UPF0161 family.

The protein resides in the cell membrane. Could be involved in insertion of integral membrane proteins into the membrane. This is Putative membrane protein insertion efficiency factor from Bacillus pumilus (strain SAFR-032).